The sequence spans 319 residues: L-lactate dehydrogenase 2 (319 aa).

NAD(+) contacts are provided by residues V17, D38, K43, Y69, and 83–84; that span reads GA. Substrate is bound by residues Q86 and R92. Residues S105, 122-124, and S147 contribute to the NAD(+) site; that span reads ATN. Position 124–127 (124–127) interacts with substrate; the sequence is NPVD. 152-155 serves as a coordination point for substrate; the sequence is DSGR. Residues R157 and H172 each coordinate beta-D-fructose 1,6-bisphosphate. The Proton acceptor role is filled by H179. Y224 carries the post-translational modification Phosphotyrosine. Residue T233 coordinates substrate.

Belongs to the LDH/MDH superfamily. LDH family. As to quaternary structure, homotetramer.

The protein localises to the cytoplasm. The catalysed reaction is (S)-lactate + NAD(+) = pyruvate + NADH + H(+). It functions in the pathway fermentation; pyruvate fermentation to lactate; (S)-lactate from pyruvate: step 1/1. Its activity is regulated as follows. Allosterically activated by fructose 1,6-bisphosphate (FBP). Functionally, catalyzes the conversion of lactate to pyruvate. This Peribacillus psychrosaccharolyticus (Bacillus psychrosaccharolyticus) protein is L-lactate dehydrogenase 2.